A 260-amino-acid chain; its full sequence is tRNA (guanine-N(1)-)-methyltransferase (260 aa).

Residues Gly-117 and 137 to 142 (LGDFVL) each bind S-adenosyl-L-methionine.

The protein belongs to the RNA methyltransferase TrmD family. In terms of assembly, homodimer.

It is found in the cytoplasm. It carries out the reaction guanosine(37) in tRNA + S-adenosyl-L-methionine = N(1)-methylguanosine(37) in tRNA + S-adenosyl-L-homocysteine + H(+). In terms of biological role, specifically methylates guanosine-37 in various tRNAs. The sequence is that of tRNA (guanine-N(1)-)-methyltransferase from Cupriavidus taiwanensis (strain DSM 17343 / BCRC 17206 / CCUG 44338 / CIP 107171 / LMG 19424 / R1) (Ralstonia taiwanensis (strain LMG 19424)).